Here is a 96-residue protein sequence, read N- to C-terminus: Uteroglobin (96 aa).

The N-terminal stretch at 1 to 19 (MKIAITITVLMLSICCSSA) is a signal peptide.

It belongs to the secretoglobin family. As to quaternary structure, antiparallel homodimer; disulfide-linked. Interaction with LMBR1L is controversial. As to expression, club cells (nonciliated cells of the surface epithelium of the pulmonary airways).

It is found in the secreted. Functionally, binds phosphatidylcholine, phosphatidylinositol, polychlorinated biphenyls (PCB) and weakly progesterone, potent inhibitor of phospholipase A2. The protein is Uteroglobin (Scgb1a1) of Rattus norvegicus (Rat).